The chain runs to 181 residues: Large ribosomal subunit protein uL16 (181 aa).

It belongs to the universal ribosomal protein uL16 family. Part of the 50S ribosomal subunit.

In Pyrococcus furiosus (strain ATCC 43587 / DSM 3638 / JCM 8422 / Vc1), this protein is Large ribosomal subunit protein uL16.